The following is a 191-amino-acid chain: Transcriptional regulator MET32 (191 aa).

Residues 70–96 form a disordered region; sequence KKENALPKPPKSSKSKPQDRRNSTGEK. The segment covering 85–96 has biased composition (basic and acidic residues); it reads KPQDRRNSTGEK. Residues 98–120 form a C2H2-type 1 zinc finger; sequence FKCAKCSLEFSRSSDLRRHEKTH. The segment at 126 to 150 adopts a C2H2-type 2; atypical zinc-finger fold; it reads NICPQCGKGFARKDALKRHYDTLTC.

As to quaternary structure, interacts with MET4 and MET28.

The protein localises to the cytoplasm. Its subcellular location is the nucleus. In terms of biological role, auxiliary transcriptional regulator of sulfur amino acid metabolism. Involved in the transcriptional activation of MET28. The sequence is that of Transcriptional regulator MET32 (MET32) from Saccharomyces cerevisiae (strain ATCC 204508 / S288c) (Baker's yeast).